The chain runs to 962 residues: Phenylalanine--tRNA ligase beta subunit (962 aa).

Residues 85-201 (TIRWCKVRVC…AEVFQGDELS (117 aa)) enclose the tRNA-binding domain. One can recognise a B5 domain in the interval 456–538 (TQQSPILLST…RVIGFNRIPS (83 aa)). Mg(2+) contacts are provided by aspartate 516, aspartate 522, glutamate 525, and glutamate 526. Positions 621-675 (PDSTHNPDSGSDPIIPTGVTRITEPGSSGVSGPGNVGVKEKCSADTSIEHAPTTR) are insert. Positions 870 to 961 (PTSPAATQHL…ASSKFGAIMR (92 aa)) constitute an FDX-ACB domain.

The protein belongs to the phenylalanyl-tRNA synthetase beta subunit family. Type 1 subfamily. Tetramer of two alpha and two beta subunits. Mg(2+) serves as cofactor.

Its subcellular location is the cytoplasm. The enzyme catalyses tRNA(Phe) + L-phenylalanine + ATP = L-phenylalanyl-tRNA(Phe) + AMP + diphosphate + H(+). The chain is Phenylalanine--tRNA ligase beta subunit from Tropheryma whipplei (strain Twist) (Whipple's bacillus).